The following is an 854-amino-acid chain: Fibroblast growth factor receptor 1 (854 aa).

An N-terminal signal peptide occupies residues 1-20 (MSGLFFLLSELLILLGKINS). Topologically, residues 21–383 (VSKKSLCHPE…NFFMNSVPLS (363 aa)) are extracellular. Positions 29-120 (PELFKIDNKL…SSVFFLINVT (92 aa)) constitute an Ig-like C2-type 1 domain. Cysteine 50 and cysteine 102 are oxidised to a cystine. Residues asparagine 95, asparagine 99, asparagine 110, asparagine 118, asparagine 140, asparagine 175, asparagine 202, asparagine 248, asparagine 283, asparagine 317, and asparagine 346 are each glycosylated (N-linked (GlcNAc...) asparagine). Ig-like C2-type domains follow at residues 147–259 (PEMG…FTFT) and 268–369 (PHLT…LSVI). Cysteine 166 and cysteine 242 are disulfide-bonded. Residues cysteine 288 and cysteine 353 are joined by a disulfide bond. Residues 384–404 (IFLVIGFFVAIILLSLIIYCF) traverse the membrane as a helical segment. Residues 405-854 (FLQYKNAVDS…SDYLEPKCLV (450 aa)) are Cytoplasmic-facing. The 272-residue stretch at 551–822 (KITNKKLGEG…EIVEILIDII (272 aa)) folds into the Protein kinase domain. ATP is bound by residues 557 to 565 (LGEGAFGMV) and lysine 585. Aspartate 689 functions as the Proton acceptor in the catalytic mechanism. Tyrosine 718 is subject to Phosphotyrosine; by autocatalysis.

The protein belongs to the protein kinase superfamily. Tyr protein kinase family. Fibroblast growth factor receptor subfamily. Expressed in brain, stem cells and the mesenchymal cells.

It localises to the membrane. It catalyses the reaction L-tyrosyl-[protein] + ATP = O-phospho-L-tyrosyl-[protein] + ADP + H(+). Its function is as follows. Receptor for basic fibroblast growth factor. The sequence is that of Fibroblast growth factor receptor 1 (FGFR1) from Dugesia japonica (Planarian).